The following is a 190-amino-acid chain: Putative 3-methyladenine DNA glycosylase (190 aa).

This sequence belongs to the DNA glycosylase MPG family.

This Rubrobacter xylanophilus (strain DSM 9941 / JCM 11954 / NBRC 16129 / PRD-1) protein is Putative 3-methyladenine DNA glycosylase.